Consider the following 1939-residue polypeptide: MTDSQMADFGAAAEYLRKSEKERLEAQTRPFDIRTECFVPDDKEEFVKAKIVSREGGKVTAETENGKTVTVKEDQVMQQNPPKFDKIEDMAMLTFLHEPAVLYNLKERYAAWMIYTYSGLFCVTVNPYKWLPVYNAEVVAAYRGKKRSEAPAHIFSISDNAYQYMLTDRENQSILITGESGAGKTVNTKRVIQYFASIAAIGDRSKKDNPNANKGTLEDQIIQANPALEAFGNAKTVRNDNSSRFGKFIRIHFGATGKLASADIETYLLEKSRVIFQLKAERNYHIFYQILSNKKPELLDMLLVTNNPYDYAFVSQGEVSVASIDDSEELLATDSAFDVLGFTAEEKAGVYKLTGAIMHYGNMKFKQKQREEQAEPDGTEDADKSAYLMGLNSADLLKGLCHPRVKVGNEYVTKGQSVQQVYYSIGALGKSVYEKMFNWMVTRINATLETKQPRQYFIGVLDIAGFEIFDFNSFEQLCINFTNEKLQQFFNHHMFVLEQEEYKKEGIEWEFIDFGMDLQACIDLIEKPMGIMSILEEECMFPKATDMTFKAKLYDNHLGKSNNFQKPRNVKGKQEAHFSLVHYAGTVDYNILGWLEKNKDPLNETVVGLYQKSSLKLMATLFSTYASADAGDSGKGKGGKKKGSSFQTVSALHRENLNKLMTNLRTTHPHFVRCIIPNERKAPGVMDNPLVMHQLRCNGVLEGIRICRKGFPNRILYGDFRQRYRILNPAAIPEGQFIDSRKGAEKLLSSLDIDHNQYKFGHTKVFFKAGLLGLLEEMRDERLSRIITRIQAQARGQLMRIEFKKMVERRDALLVIQWNIRAFMGVKNWPWMKLYFKIKPLLKSAETEKEMANMKEEFGRVKESLEKSEARRKELEEKMVSLLQEKNDLQFQVQAEQDNLNDAEERCDQLIKNKIQLEAKVKEMTERLEDEEEMNAELTSKKRKLEDECSELKKDIDDLELTLAKVEKEKHATENKVKNLTEEMAGLDEIIAKLTKEKKALQEAHQQALDDLQAEEDKVNTLTKSKVKLEQQVDDLEGSLEQEKKVRMDLERAKRKLEGDLNVTQESIMDLENDKLQLEEKLKKKEFDISQQNSKIEDEQALALQLQKKLKENQARIEELEEELEAERTARAKVEKLRSDLTRELEEISERLEEAGGATSVQIEMNKKREAEFQKMRRDLEEATLQHEATAAALRKKHADSVAELGEQIDNLQRVKQKLEKEKSEFKLELDDVTSNMEQIIKAKANLEKVSRTLEDQANEYRVKLEESQRSLNDFTTQRAKLQTENGELARQLEEKEALISQLTRGKLSYTQQMEDLKRQLEEEGKAKNALAHALQSARHDCDLLREQYEEEMEAKAELQRVLSKANSEVAQWRTKYETDAIQRTEELEEAKKKLAQRLQDAEEAVEAVNAKCSSLEKTKHRLQNEIEDLMVDVERSNAAAAALDKKQRNFDKILAEWKQKYEESQSELESSQKEARSLSTELFKLKNAYEESLEHLETFKRENKNLQEEISDLTEQLGEGGKNVHELEKVRKQLEVEKMELQSALEEAEASLEHEEGKILRAQLEFNQIKAEIERKLAEKDEEMEQAKRNHLRVVDSLQTSLDAETRSRNEALRVKKKMEGDLNEMEIQLSQANRIASEAQKHLKNAQAHLKDTQLQLDDALHANDDLKENIAIVERRNTLLQAELEELRAVVEQTERSRKLAEQELIETSERVQLLHSQNTSLINQKKKMEADLTQLQTEVEEAVQECRNAEEKAKKAITDAAMMAEELKKEQDTSAHLERMKKNMEQTIKDLQHRLDEAEQIALKGGKKQLQKLEARVRELENELEAEQKRNAESVKGMRKSERRIKELTYQTEEDKKNLVRLQDLVDKLQLKVKAYKRQAEEAEEQANTNLSKFRKVQHELDEAEERADIAESQVNKLRAKSRDIGAKQKMHDEE.

Residues 32–81 enclose the Myosin N-terminal SH3-like domain; it reads DIRTECFVPDDKEEFVKAKIVSREGGKVTAETENGKTVTVKEDQVMQQNP. Residues 85–780 enclose the Myosin motor domain; sequence DKIEDMAMLT…LLGLLEEMRD (696 aa). The residue at position 129 (K129) is an N6,N6,N6-trimethyllysine. Residue 178–185 participates in ATP binding; it reads GESGAGKT. T379 carries the phosphothreonine modification. At S417 the chain carries Phosphoserine. Actin-binding stretches follow at residues 657-679 and 759-773; these read LNKLMTNLRTTHPHFVRCIIPNE and KFGHTKVFFKAGLLG. Residues 783 to 812 enclose the IQ domain; sequence LSRIITRIQAQARGQLMRIEFKKMVERRDA. Residues 842-1939 adopt a coiled-coil conformation; sequence LKSAETEKEM…GAKQKMHDEE (1098 aa). A phosphoserine mark is found at S1090 and S1139. Phosphotyrosine is present on Y1261. S1271 carries the post-translational modification Phosphoserine. Phosphothreonine occurs at positions 1277 and 1284. S1309 carries the post-translational modification Phosphoserine. Y1310 bears the Phosphotyrosine mark. Position 1311 is a phosphothreonine (T1311). S1512 is subject to Phosphoserine. A phosphothreonine mark is found at T1515 and T1681. A disordered region spans residues 1908–1939; the sequence is AEERADIAESQVNKLRAKSRDIGAKQKMHDEE. Positions 1925 to 1939 are enriched in basic and acidic residues; the sequence is KSRDIGAKQKMHDEE.

Belongs to the TRAFAC class myosin-kinesin ATPase superfamily. Myosin family. Muscle myosin is a hexameric protein that consists of 2 heavy chain subunits (MHC), 2 alkali light chain subunits (MLC) and 2 regulatory light chain subunits (MLC-2).

The protein resides in the cytoplasm. The protein localises to the myofibril. Its function is as follows. Muscle contraction. The polypeptide is Myosin-6 (MYH6) (Mesocricetus auratus (Golden hamster)).